The following is a 125-amino-acid chain: Aspartate 1-decarboxylase (125 aa).

Ser-25 functions as the Schiff-base intermediate with substrate; via pyruvic acid in the catalytic mechanism. Ser-25 bears the Pyruvic acid (Ser) mark. Thr-57 contributes to the substrate binding site. Tyr-58 serves as the catalytic Proton donor. Position 73 to 75 (73 to 75 (GAA)) interacts with substrate.

It belongs to the PanD family. As to quaternary structure, heterooctamer of four alpha and four beta subunits. Pyruvate serves as cofactor. Post-translationally, is synthesized initially as an inactive proenzyme, which is activated by self-cleavage at a specific serine bond to produce a beta-subunit with a hydroxyl group at its C-terminus and an alpha-subunit with a pyruvoyl group at its N-terminus.

The protein localises to the cytoplasm. The catalysed reaction is L-aspartate + H(+) = beta-alanine + CO2. The protein operates within cofactor biosynthesis; (R)-pantothenate biosynthesis; beta-alanine from L-aspartate: step 1/1. Catalyzes the pyruvoyl-dependent decarboxylation of aspartate to produce beta-alanine. This is Aspartate 1-decarboxylase from Herpetosiphon aurantiacus (strain ATCC 23779 / DSM 785 / 114-95).